Consider the following 174-residue polypeptide: CDP-archaeol synthase (174 aa).

Helical transmembrane passes span 14–34 (ILEA…PVVA), 59–79 (IEGL…AALA), 83–103 (MLLA…DMAG), 118–138 (APLL…IALG), and 149–169 (AAAA…LLGL).

The protein belongs to the CDP-archaeol synthase family. The cofactor is Mg(2+).

It is found in the cell membrane. The enzyme catalyses 2,3-bis-O-(geranylgeranyl)-sn-glycerol 1-phosphate + CTP + H(+) = CDP-2,3-bis-O-(geranylgeranyl)-sn-glycerol + diphosphate. It participates in membrane lipid metabolism; glycerophospholipid metabolism. Functionally, catalyzes the formation of CDP-2,3-bis-(O-geranylgeranyl)-sn-glycerol (CDP-archaeol) from 2,3-bis-(O-geranylgeranyl)-sn-glycerol 1-phosphate (DGGGP) and CTP. This reaction is the third ether-bond-formation step in the biosynthesis of archaeal membrane lipids. This Aeropyrum pernix (strain ATCC 700893 / DSM 11879 / JCM 9820 / NBRC 100138 / K1) protein is CDP-archaeol synthase.